A 268-amino-acid polypeptide reads, in one-letter code: Tryptophan synthase alpha chain (268 aa).

Residues glutamate 49 and aspartate 60 each act as proton acceptor in the active site.

Belongs to the TrpA family. Tetramer of two alpha and two beta chains.

It carries out the reaction (1S,2R)-1-C-(indol-3-yl)glycerol 3-phosphate + L-serine = D-glyceraldehyde 3-phosphate + L-tryptophan + H2O. Its pathway is amino-acid biosynthesis; L-tryptophan biosynthesis; L-tryptophan from chorismate: step 5/5. In terms of biological role, the alpha subunit is responsible for the aldol cleavage of indoleglycerol phosphate to indole and glyceraldehyde 3-phosphate. This is Tryptophan synthase alpha chain from Escherichia fergusonii (strain ATCC 35469 / DSM 13698 / CCUG 18766 / IAM 14443 / JCM 21226 / LMG 7866 / NBRC 102419 / NCTC 12128 / CDC 0568-73).